Consider the following 444-residue polypeptide: UDP-N-acetylmuramate--L-alanine ligase (444 aa).

Residue 110–116 (GAHGKTS) coordinates ATP.

It belongs to the MurCDEF family. Phosphorylated by StkP in vitro. Dephosphorylated by PhpP in vitro.

The protein resides in the cytoplasm. The enzyme catalyses UDP-N-acetyl-alpha-D-muramate + L-alanine + ATP = UDP-N-acetyl-alpha-D-muramoyl-L-alanine + ADP + phosphate + H(+). It functions in the pathway cell wall biogenesis; peptidoglycan biosynthesis. Functionally, cell wall formation. In Streptococcus pneumoniae serotype 4 (strain ATCC BAA-334 / TIGR4), this protein is UDP-N-acetylmuramate--L-alanine ligase.